The sequence spans 359 residues: UDP-N-acetylglucosamine--N-acetylmuramyl-(pentapeptide) pyrophosphoryl-undecaprenol N-acetylglucosamine transferase (359 aa).

Residues 15–17, Asn127, Arg164, Ser192, Ile246, 265–270, and Gln290 each bind UDP-N-acetyl-alpha-D-glucosamine; these read SGG and ALTVSE.

It belongs to the glycosyltransferase 28 family. MurG subfamily.

It is found in the cell membrane. The catalysed reaction is di-trans,octa-cis-undecaprenyl diphospho-N-acetyl-alpha-D-muramoyl-L-alanyl-D-glutamyl-meso-2,6-diaminopimeloyl-D-alanyl-D-alanine + UDP-N-acetyl-alpha-D-glucosamine = di-trans,octa-cis-undecaprenyl diphospho-[N-acetyl-alpha-D-glucosaminyl-(1-&gt;4)]-N-acetyl-alpha-D-muramoyl-L-alanyl-D-glutamyl-meso-2,6-diaminopimeloyl-D-alanyl-D-alanine + UDP + H(+). The protein operates within cell wall biogenesis; peptidoglycan biosynthesis. Functionally, cell wall formation. Catalyzes the transfer of a GlcNAc subunit on undecaprenyl-pyrophosphoryl-MurNAc-pentapeptide (lipid intermediate I) to form undecaprenyl-pyrophosphoryl-MurNAc-(pentapeptide)GlcNAc (lipid intermediate II). This is UDP-N-acetylglucosamine--N-acetylmuramyl-(pentapeptide) pyrophosphoryl-undecaprenol N-acetylglucosamine transferase from Wigglesworthia glossinidia brevipalpis.